Consider the following 27-residue polypeptide: Cupiennin-3b (27 aa).

The residue at position 27 (Glu27) is a Glutamic acid 1-amide.

In terms of tissue distribution, expressed by the venom gland.

The protein resides in the secreted. The sequence is that of Cupiennin-3b from Cupiennius salei (American wandering spider).